We begin with the raw amino-acid sequence, 1388 residues long: DNA-directed RNA polymerase subunit beta (1388 aa).

The protein belongs to the RNA polymerase beta chain family. In terms of assembly, the RNAP catalytic core consists of 2 alpha, 1 beta, 1 beta' and 1 omega subunit. When a sigma factor is associated with the core the holoenzyme is formed, which can initiate transcription.

It carries out the reaction RNA(n) + a ribonucleoside 5'-triphosphate = RNA(n+1) + diphosphate. DNA-dependent RNA polymerase catalyzes the transcription of DNA into RNA using the four ribonucleoside triphosphates as substrates. In Xylella fastidiosa (strain 9a5c), this protein is DNA-directed RNA polymerase subunit beta.